Here is a 693-residue protein sequence, read N- to C-terminus: MDLLPKSSKEFAAPEYWEQFFRRRGERAFEWYGGYLELCGLLHKYIKPRDKVFVVGCGNSELSEQLYDAGCQNLTNIDVSEVVIRQMNERNSNRRPNMTFQVMDATQTTFDDSCFQAVLDKGTLDAIMTDTDKGTLETADKLMSEIGRVLTCGGRFLCVSLAQAHVLEKLVRHFSQGGWMVRVHQVMQGSTSETGSQFPMPVFVFVMTKVRQISGFPTVLEMMPDEEGGKPVRWGSPEEFMEAVKERQRYALIRNRLNQNQSSQEVSLDLCDGDSRKSRYTFYIVDSPAVRLSHSNHFAIFIIPHGRETEWLFGSEQGRKQLAGSVGFNRLIIVALHRDQQYTDMKAIQSELSAKVLELAPPGLPDNQQIPFLSAGEDIGSRTIQHRGKSEFSGEYVVEDVRGDGNSSYRRLIFLSNQNVVQSEARLLPISTHIGQKKRKDKKKQQKPVKDLEQPTITRIDKSYLCCEHHKAMISGLALLPNPGLLPECQASVLVIGLGGGSLSLFIHDYFPGSRVEVVEIDPSVLDVASNWFNFCQDERMKVHLADGLVHINSLADNGEACYDVIMFDVDSKDPSVGMSCPPPAFVEKMFLQNVHNILNANGVFILNLVCRDTDLRLKVLNVLHEVFPLIYAQKIDEEVNEILFCRPNSERKFSSLELKESAKNLEKKLRKPGVQWDSTYSLAEMLKSVQIV.

Belongs to the methyltransferase superfamily.

The catalysed reaction is L-lysyl-[protein] + S-adenosyl-L-methionine = N(6)-methyl-L-lysyl-[protein] + S-adenosyl-L-homocysteine + H(+). It catalyses the reaction N(6)-methyl-L-lysyl-[protein] + S-adenosyl-L-methionine = N(6),N(6)-dimethyl-L-lysyl-[protein] + S-adenosyl-L-homocysteine + H(+). The enzyme catalyses N-terminal glycyl-L-lysyl-L-glutamyl-[protein] + 3 S-adenosyl-L-methionine = N-terminal N,N,N-trimethyl-glycyl-L-lysyl-L-glutamyl-[protein] + 3 S-adenosyl-L-homocysteine + 3 H(+). Its function is as follows. Dual methyltransferase that catalyzes methylation of elongation factor 1-alpha (eef1a1 and eef1a2) at two different positions, and is therefore involved in the regulation of mRNA translation. Via its C-terminus, methylates the N-terminus of eef1a1 and eef1a2. Via its N-terminus dimethylates lysine residues of eef1a1 and eef1a2. In Xenopus laevis (African clawed frog), this protein is eEF1A lysine and N-terminal methyltransferase (mettl13).